Reading from the N-terminus, the 511-residue chain is GMP synthase [glutamine-hydrolyzing] (511 aa).

The 191-residue stretch at 5–195 (DILVLDFGSQ…AKYACNCDSV (191 aa)) folds into the Glutamine amidotransferase type-1 domain. The active-site Nucleophile is C82. Residues H169 and E171 contribute to the active site. The GMPS ATP-PPase domain occupies 196–386 (WNMGSFAKTQ…LGLSKDVVYR (191 aa)). Position 223–229 (223–229 (SGGVDSS)) interacts with ATP.

Homodimer.

The enzyme catalyses XMP + L-glutamine + ATP + H2O = GMP + L-glutamate + AMP + diphosphate + 2 H(+). It functions in the pathway purine metabolism; GMP biosynthesis; GMP from XMP (L-Gln route): step 1/1. Functionally, catalyzes the synthesis of GMP from XMP. The chain is GMP synthase [glutamine-hydrolyzing] from Campylobacter lari (strain RM2100 / D67 / ATCC BAA-1060).